Here is a 384-residue protein sequence, read N- to C-terminus: Zinc finger CCCH domain-containing protein 12 (384 aa).

Disordered regions lie at residues 1-32 (MSHH…NLGD) and 46-81 (WAMN…SAAS). A compositionally biased stretch (polar residues) spans 50–60 (PDNTSGDNNGP). The segment covering 70 to 81 (SSSSATTTSAAS) has biased composition (low complexity). 2 consecutive C3H1-type zinc fingers follow at residues 91-118 (FFKT…HTVE) and 172-200 (SFKG…HDEA). The disordered stretch occupies residues 211–231 (LGPGGYGSGGGGGSGGGSVGG). Residues 212 to 231 (GPGGYGSGGGGGSGGGSVGG) are compositionally biased toward gly residues. A C3H1-type 3 zinc finger spans residues 260-288 (NWKTRICNKWEITGYCPFGAKCHFAHGAA). Positions 299–335 (EEEGKDGVSPNPDTKQTVQNPKGLSDTTTLLSPGVPH) are disordered. Over residues 309 to 329 (NPDTKQTVQNPKGLSDTTTLL) the composition is skewed to polar residues.

The sequence is that of Zinc finger CCCH domain-containing protein 12 from Arabidopsis thaliana (Mouse-ear cress).